The sequence spans 130 residues: Small ribosomal subunit protein bS16 (130 aa).

The span at 98-109 shows a compositional bias: basic and acidic residues; it reads AAAKQAAKDAAE. Residues 98–130 are disordered; sequence AAAKQAAKDAAEAKAAAAAEAEAPAADAEASEG. Residues 110–130 are compositionally biased toward low complexity; sequence AKAAAAAEAEAPAADAEASEG.

It belongs to the bacterial ribosomal protein bS16 family.

The sequence is that of Small ribosomal subunit protein bS16 from Synechococcus sp. (strain CC9902).